A 1483-amino-acid chain; its full sequence is Guanylyl cyclase, membrane (1483 aa).

6 helical membrane passes run Ile-50–Pro-70, Phe-143–Ala-163, Leu-168–Glu-188, Met-198–Leu-218, Ala-219–Gly-239, and Met-242–Phe-262. Residues Lys-323–Leu-376 form a disordered region. Over residues Asp-355–Leu-376 the composition is skewed to polar residues. Residues Thr-395–Ala-517 form the Guanylate cyclase 1 domain. 2 disordered regions span residues Asn-598–Asn-619 and Leu-672–Phe-838. Polar residues predominate over residues Gly-610–Asn-619. Low complexity-rich tracts occupy residues Leu-672–Ser-684, Ser-693–Thr-712, and Asn-720–Asn-765. Residues Ser-772–Leu-786 are compositionally biased toward polar residues. The next 6 membrane-spanning stretches (helical) occupy residues Ile-907 to Phe-927, Ile-982 to Ser-1002, Val-1016 to Pro-1036, Ile-1040 to Phe-1060, Ser-1061 to Ile-1081, and Ile-1094 to Tyr-1114. The Guanylate cyclase 2 domain occupies Thr-1168–Glu-1296. The Mg(2+) site is built by Asp-1173, Ile-1174, and Asp-1217. Disordered stretches follow at residues Gln-1348–Tyr-1369 and Asn-1393–Ser-1483. Positions Arg-1354–Tyr-1369 are enriched in polar residues. Low complexity predominate over residues Asn-1405 to Ile-1416. Residues Asn-1432 to Glu-1444 are compositionally biased toward acidic residues. Over residues Asn-1446 to Ile-1465 the composition is skewed to low complexity.

Belongs to the adenylyl cyclase class-4/guanylyl cyclase family. As to quaternary structure, homodimer. It depends on Mg(2+) as a cofactor.

The protein resides in the membrane. It catalyses the reaction GTP = 3',5'-cyclic GMP + diphosphate. Its activity is regulated as follows. Activated by guanosine 5'-3-O-(thio)triphosphate (GTPgammaS). Inhibited by calcium. Synthesizes cyclic GMP (cGMP) from GTP, after activation by heterotrimeric or monomeric G proteins. Involved in chemotaxis. In Dictyostelium discoideum (Social amoeba), this protein is Guanylyl cyclase, membrane (gca).